The following is a 567-amino-acid chain: Thiol:disulfide interchange protein DsbD (567 aa).

The N-terminal stretch at 1–19 (MAQRIFTLILLLCSTSAFA) is a signal peptide. Disulfide bonds link Cys122–Cys128 and Cys185–Cys307. 8 helical membrane passes run 166 to 186 (LPFS…TPCV), 211 to 231 (LLAF…GLVV), 246 to 266 (YVLI…FGLF), 299 to 319 (IAGL…LLYI), 326 to 346 (WLGG…LMLV), 360 to 380 (WMAH…VFLL), 387 to 407 (AWGL…AFIT), and 418 to 438 (IVQI…QDWA). Residues 435–567 (QDWAFGSPSA…FSAHLHDRQP (133 aa)) form the Thioredoxin domain. A disulfide bridge connects residues Cys482 and Cys485.

It belongs to the thioredoxin family. DsbD subfamily.

The protein localises to the cell inner membrane. It catalyses the reaction [protein]-dithiol + NAD(+) = [protein]-disulfide + NADH + H(+). The enzyme catalyses [protein]-dithiol + NADP(+) = [protein]-disulfide + NADPH + H(+). In terms of biological role, required to facilitate the formation of correct disulfide bonds in some periplasmic proteins and for the assembly of the periplasmic c-type cytochromes. Acts by transferring electrons from cytoplasmic thioredoxin to the periplasm. This transfer involves a cascade of disulfide bond formation and reduction steps. This chain is Thiol:disulfide interchange protein DsbD, found in Salmonella paratyphi A (strain ATCC 9150 / SARB42).